We begin with the raw amino-acid sequence, 166 residues long: MFKQLIKTTLTNSRSFSTNTGSGSKIGNIIGKIGIGKLNHVAIATPNLQESMDLYKNVFGADVSEPVNQVEHGVTTVFVGLENTKIELLHPFGDKSPIENFLKKNPSGGIHHICLEVDDIHHAVKTLLAENVRIIDPTPKIGAHGKPVVFLHPKSMNGVLVELEEK.

Residues 1–23 constitute a mitochondrion transit peptide; the sequence is MFKQLIKTTLTNSRSFSTNTGSG. The 130-residue stretch at 37 to 166 folds into the VOC domain; it reads KLNHVAIATP…NGVLVELEEK (130 aa). 3 residues coordinate Co(2+): histidine 40, histidine 112, and glutamate 162.

It belongs to the methylmalonyl-CoA epimerase family.

Its subcellular location is the mitochondrion. It catalyses the reaction (R)-methylmalonyl-CoA = (S)-methylmalonyl-CoA. Functionally, methylmalonyl-CoA epimerase involved in propionyl-CoA metabolism. The sequence is that of Methylmalonyl-CoA epimerase, mitochondrial (mcee) from Dictyostelium discoideum (Social amoeba).